Consider the following 250-residue polypeptide: tRNA (guanine-N(7)-)-methyltransferase (250 aa).

Over residues 1-10 (MTPDDPRDAS) the composition is skewed to basic and acidic residues. The tract at residues 1–30 (MTPDDPRDASDASLADATADSASRGHGSFF) is disordered. Residues 11–24 (DASLADATADSASR) are compositionally biased toward low complexity. S-adenosyl-L-methionine-binding residues include E79, E104, D131, and D153. D153 is a catalytic residue. Positions 157 and 189 each coordinate substrate.

The protein belongs to the class I-like SAM-binding methyltransferase superfamily. TrmB family.

The enzyme catalyses guanosine(46) in tRNA + S-adenosyl-L-methionine = N(7)-methylguanosine(46) in tRNA + S-adenosyl-L-homocysteine. It participates in tRNA modification; N(7)-methylguanine-tRNA biosynthesis. In terms of biological role, catalyzes the formation of N(7)-methylguanine at position 46 (m7G46) in tRNA. This is tRNA (guanine-N(7)-)-methyltransferase from Rhodopseudomonas palustris (strain BisA53).